The following is a 622-amino-acid chain: Chaperone protein DnaK (622 aa).

A Phosphothreonine; by autocatalysis modification is found at Thr197. 2 stretches are compositionally biased toward basic and acidic residues: residues Leu515 to Glu528 and Ala575 to Asp614. 2 disordered regions span residues Leu515–Val537 and Ala575–Glu622.

This sequence belongs to the heat shock protein 70 family.

Functionally, acts as a chaperone. The protein is Chaperone protein DnaK of Campylobacter lari (strain RM2100 / D67 / ATCC BAA-1060).